Consider the following 295-residue polypeptide: Bifunctional protein FolD (295 aa).

NADP(+) contacts are provided by residues 166 to 168 (GRS), Ser191, and Ile232.

Belongs to the tetrahydrofolate dehydrogenase/cyclohydrolase family. As to quaternary structure, homodimer.

It carries out the reaction (6R)-5,10-methylene-5,6,7,8-tetrahydrofolate + NADP(+) = (6R)-5,10-methenyltetrahydrofolate + NADPH. The enzyme catalyses (6R)-5,10-methenyltetrahydrofolate + H2O = (6R)-10-formyltetrahydrofolate + H(+). It participates in one-carbon metabolism; tetrahydrofolate interconversion. Catalyzes the oxidation of 5,10-methylenetetrahydrofolate to 5,10-methenyltetrahydrofolate and then the hydrolysis of 5,10-methenyltetrahydrofolate to 10-formyltetrahydrofolate. The chain is Bifunctional protein FolD from Rhodopseudomonas palustris (strain BisA53).